Reading from the N-terminus, the 1046-residue chain is Probable inorganic carbon transporter subunit DabA1 (1046 aa).

Zn(2+) is bound by residues Cys-462, Asp-464, His-721, and Cys-736.

The protein belongs to the inorganic carbon transporter (TC 9.A.2) DabA family. Forms a complex with DabB1. Zn(2+) serves as cofactor.

The protein localises to the cell inner membrane. Part of an energy-coupled inorganic carbon pump. The protein is Probable inorganic carbon transporter subunit DabA1 of Halothiobacillus neapolitanus (strain ATCC 23641 / c2) (Thiobacillus neapolitanus).